The following is a 297-amino-acid chain: UDP-N-acetylenolpyruvoylglucosamine reductase (297 aa).

The FAD-binding PCMH-type domain maps to 27-191; that stretch reads TGGNADIFVM…LDATFSLELE (165 aa). Residue Arg170 is part of the active site. The Proton donor role is filled by Ser220. Residue Glu290 is part of the active site.

Belongs to the MurB family. It depends on FAD as a cofactor.

Its subcellular location is the cytoplasm. It carries out the reaction UDP-N-acetyl-alpha-D-muramate + NADP(+) = UDP-N-acetyl-3-O-(1-carboxyvinyl)-alpha-D-glucosamine + NADPH + H(+). The protein operates within cell wall biogenesis; peptidoglycan biosynthesis. In terms of biological role, cell wall formation. The polypeptide is UDP-N-acetylenolpyruvoylglucosamine reductase (Listeria welshimeri serovar 6b (strain ATCC 35897 / DSM 20650 / CCUG 15529 / CIP 8149 / NCTC 11857 / SLCC 5334 / V8)).